The primary structure comprises 631 residues: MNVNELRSRAASQEQDPCTLSNYRGFEVVQSSLDLNVSFEKKNVSGTVTYELKNLKSTTEVVLDTSFLDIEQAFVDEKAVDFKLEARKEPFGSPLVIKLANVVEKLKISIKFATTENCSALQFIDKEATDSKVCDYLFSQCQAIHARSLFPCFDTPAVKSPYSFHVKSPSYTLMSGRPVECSEENTYRFEQPIPIPSYLVAIASGNLAGAPIGPRSTVYTEPPNLKACQWEFEKDMENFLVVAEDLIYKYEWLKYDALILPSSFPYGGMENPNITFATPTLISKDRSQVKVMAHELAHSWSGNLVTNCTWEHFWLNEGWTVYLERRILGGVASYEAKQRGEKDYVDAGEKVRHFAAILGWNDLVDTVKTIPSQYTRLVWDLKTVTPDDAFSKIPYEKGFSFLFYLETVLGGTDEFDPFMKHYFKKYRYKSLDSYQFIDTLYEFFEPKGKKDVLDSVDWNTWLYGEGVPPFTPKYDTRLADECYHLRDKWAAYEQNKGQFSASDIEHFEVNQHLLFLGTLTELFSNKKPAPEVYEELRKVYHQYSEASNCEIIASWNDLLLKSENFKPSDKIVQNFATWLGTVGRMKFARPGYKLLKDYVDKDLAIATFRKFESRYHPICKAMVRKDLGLDS.

Residues 140 to 142 and 265 to 270 contribute to the substrate site; these read QCQ and PYGGME. Histidine 294 lines the Zn(2+) pocket. The active-site Proton acceptor is glutamate 295. Positions 298 and 317 each coordinate Zn(2+). Tyrosine 395 serves as the catalytic Proton donor.

It belongs to the peptidase M1 family. Requires Zn(2+) as cofactor.

It localises to the cytoplasm. The protein resides in the nucleus. It carries out the reaction an epoxide + H2O = an ethanediol. Functionally, aminopeptidase that preferentially cleaves di- and tripeptides. Also has low epoxide hydrolase activity (in vitro). Can hydrolyze the epoxide leukotriene LTA(4) but it forms preferentially 5,6-dihydroxy-7,9,11,14-eicosatetraenoic acid rather than the cytokine leukotriene B(4) as the product compared to the homologous mammalian enzyme (in vitro). The chain is Leucine aminopeptidase 2-2 from Meyerozyma guilliermondii (strain ATCC 6260 / CBS 566 / DSM 6381 / JCM 1539 / NBRC 10279 / NRRL Y-324) (Yeast).